A 144-amino-acid polypeptide reads, in one-letter code: D-aminoacyl-tRNA deacylase (144 aa).

The Gly-cisPro motif, important for rejection of L-amino acids signature appears at 136 to 137 (GP).

Belongs to the DTD family. In terms of assembly, homodimer.

It is found in the cytoplasm. It carries out the reaction glycyl-tRNA(Ala) + H2O = tRNA(Ala) + glycine + H(+). It catalyses the reaction a D-aminoacyl-tRNA + H2O = a tRNA + a D-alpha-amino acid + H(+). Functionally, an aminoacyl-tRNA editing enzyme that deacylates mischarged D-aminoacyl-tRNAs. Also deacylates mischarged glycyl-tRNA(Ala), protecting cells against glycine mischarging by AlaRS. Acts via tRNA-based rather than protein-based catalysis; rejects L-amino acids rather than detecting D-amino acids in the active site. By recycling D-aminoacyl-tRNA to D-amino acids and free tRNA molecules, this enzyme counteracts the toxicity associated with the formation of D-aminoacyl-tRNA entities in vivo and helps enforce protein L-homochirality. This is D-aminoacyl-tRNA deacylase from Vibrio cholerae serotype O1 (strain ATCC 39541 / Classical Ogawa 395 / O395).